The sequence spans 425 residues: Serine--tRNA ligase (425 aa).

L-serine is bound at residue 233-235; the sequence is TAE. Residue 264 to 266 coordinates ATP; that stretch reads RRE. Glu287 is a binding site for L-serine. 351–354 contacts ATP; sequence EISS. Ser387 is a binding site for L-serine.

Belongs to the class-II aminoacyl-tRNA synthetase family. Type-1 seryl-tRNA synthetase subfamily. In terms of assembly, homodimer. The tRNA molecule binds across the dimer.

It is found in the cytoplasm. It catalyses the reaction tRNA(Ser) + L-serine + ATP = L-seryl-tRNA(Ser) + AMP + diphosphate + H(+). It carries out the reaction tRNA(Sec) + L-serine + ATP = L-seryl-tRNA(Sec) + AMP + diphosphate + H(+). The protein operates within aminoacyl-tRNA biosynthesis; selenocysteinyl-tRNA(Sec) biosynthesis; L-seryl-tRNA(Sec) from L-serine and tRNA(Sec): step 1/1. Catalyzes the attachment of serine to tRNA(Ser). Is also able to aminoacylate tRNA(Sec) with serine, to form the misacylated tRNA L-seryl-tRNA(Sec), which will be further converted into selenocysteinyl-tRNA(Sec). This Thermotoga neapolitana (strain ATCC 49049 / DSM 4359 / NBRC 107923 / NS-E) protein is Serine--tRNA ligase.